The following is a 362-amino-acid chain: ATPase ARSA2 (362 aa).

An ATP-binding site is contributed by 27 to 34 (KGGVGKTT). Aspartate 58 is an active-site residue. ATP contacts are provided by glutamate 235 and asparagine 262.

It belongs to the arsA ATPase family. Homodimer. Interacts with SEC61B.

The protein localises to the cytoplasm. It is found in the cytosol. It localises to the endoplasmic reticulum. Functionally, ATPase required for the post-translational delivery of tail-anchored (TA) proteins to the endoplasmic reticulum. Recognizes and selectively binds the transmembrane domain of TA proteins in the cytosol. This complex then targets to the endoplasmic reticulum by membrane-bound receptors, where the tail-anchored protein is released for insertion. This process is regulated by ATP binding and hydrolysis. ATP binding drives the homodimer towards the closed dimer state, facilitating recognition of newly synthesized TA membrane proteins. ATP hydrolysis is required for insertion. Subsequently, the homodimer reverts towards the open dimer state, lowering its affinity for the membrane-bound receptor, and returning it to the cytosol to initiate a new round of targeting. The chain is ATPase ARSA2 from Chlamydomonas reinhardtii (Chlamydomonas smithii).